Reading from the N-terminus, the 248-residue chain is Killer cell lectin-like receptor subfamily I member 1 (248 aa).

The Cytoplasmic segment spans residues 1–80 (MLHSKRREYT…RQGPKSTVWR (80 aa)). Short sequence motifs (ITIM motif) lie at residues 16–21 (VTYTEL) and 47–52 (LKYGEL). The helical; Signal-anchor for type II membrane protein transmembrane segment at 81–101 (VVTGMLGALCVVLMTTTGILL) threads the bilayer. The Extracellular segment spans residues 102–248 (PKLFSSQEEQ…KKSYICEFNI (147 aa)). 3 disulfide bridges follow: C132–C145, C161–C244, and C223–C236. A C-type lectin domain is found at 139–245 (FGNNFYCVFK…CSAKKSYICE (107 aa)). N197, N214, and N220 each carry an N-linked (GlcNAc...) asparagine glycan.

Heterodimer with KLRE1. Interacts with PTPN6. In terms of tissue distribution, expressed in natural killer (NK) cells.

The protein resides in the cell membrane. Lectin-like receptor for natural killer (NK) cells. Heterodimer formation with KLRE1 mediates inhibition of NK cell cytolytic activity. The chain is Killer cell lectin-like receptor subfamily I member 1 from Mus musculus (Mouse).